The following is a 1385-amino-acid chain: Contactin-associated protein 1 (1385 aa).

Residues 1-20 (MMSLRLFSILLATVVSGAWG) form the signal peptide. The Extracellular portion of the chain corresponds to 21–1284 (WGYYGCNEEL…PYYHDDGWIA (1264 aa)). Residues 26–169 (CNEELVGPLY…IGLRLGIYGC (144 aa)) enclose the F5/8 type C domain. C26 and C169 are joined by a disulfide. N-linked (GlcNAc...) asparagine glycans are attached at residues N121, N129, and N277. 2 Laminin G-like domains span residues 204-356 (FKTE…AFRC) and 390-539 (FRTW…FDTC). A disulfide bridge connects residues C324 and C356. N421, N500, and N519 each carry an N-linked (GlcNAc...) asparagine glycan. Intrachain disulfides connect C507–C539, C545–C556, C550–C565, and C567–C577. The 33-residue stretch at 545 to 577 (CSPNMCEHDGRCYQSWDDFICYCELTGYKGVTC) folds into the EGF-like 1 domain. The 220-residue stretch at 577–796 (CHEPLYKESC…NTISFHTGAA (220 aa)) folds into the Fibrinogen C-terminal domain. 9 N-linked (GlcNAc...) asparagine glycosylation sites follow: N598, N654, N665, N764, N805, N844, N861, N949, and N957. The Laminin G-like 3 domain occupies 814 to 958 (FRTSAPSGVF…NASEGTFPNC (145 aa)). 4 cysteine pairs are disulfide-bonded: C931-C958, C962-C975, C969-C984, and C986-C996. Residues 962 to 996 (CTHPRFPCFHGGRCVERYSYYTCDCDLTAFDGPYC) form the EGF-like 2 domain. N1079 and N1148 each carry an N-linked (GlcNAc...) asparagine glycan. The region spanning 1089–1251 (FSTNSAPAVL…VQGELSESNC (163 aa)) is the Laminin G-like 4 domain. Cysteines 1210 and 1251 form a disulfide. The helical transmembrane segment at 1285–1305 (ILLGFLVAFLLLGLVGMLVLF) threads the bilayer. Over 1306–1385 (YLQNHRYKGS…PQILEESRSE (80 aa)) the chain is Cytoplasmic. The segment at 1317-1385 (HTNEPKATHD…PQILEESRSE (69 aa)) is disordered. Over residues 1319–1329 (NEPKATHDSHP) the composition is skewed to basic and acidic residues. The segment covering 1334 to 1367 (PLPPSGPAQAPAPTPAPTQLPTPAPAPAPAPASG) has biased composition (pro residues). The short motif at 1334-1370 (PLPPSGPAQAPAPTPAPTQLPTPAPAPAPAPASGPGP) is the SH3-binding element. S1384 bears the Phosphoserine mark.

It belongs to the neurexin family. In terms of assembly, interacts with CNTN1/contactin in cis form. In terms of tissue distribution, expressed in brain. In myelinated nerve fibers predominantly found in paranodal axoglial junctions. In the internodal region of myelinated axons in the CNS and the PNS also found as a thin line apposing the inner mesaxon of the myelin sheath. In PNS neurons this line forms a circumferential ring that apposes the innermost aspect of Schmidt-Lanterman incisures.

The protein resides in the membrane. It localises to the cell junction. It is found in the paranodal septate junction. Required, with CNTNAP2, for radial and longitudinal organization of myelinated axons. Plays a role in the formation of functional distinct domains critical for saltatory conduction of nerve impulses in myelinated nerve fibers. Demarcates the paranodal region of the axo-glial junction. In association with contactin involved in the signaling between axons and myelinating glial cells. This Mus musculus (Mouse) protein is Contactin-associated protein 1 (Cntnap1).